We begin with the raw amino-acid sequence, 530 residues long: Light-independent protochlorophyllide reductase subunit B (530 aa).

Residue D36 participates in [4Fe-4S] cluster binding. The active-site Proton donor is the D290. 425–426 contributes to the substrate binding site; sequence GL. Positions 448–483 are disordered; it reads LGHLGGHASETKTSSKGINQSPNNHSPAGESIHWTS. The segment covering 458 to 473 has biased composition (polar residues); that stretch reads TKTSSKGINQSPNNHS.

Belongs to the ChlB/BchB/BchZ family. In terms of assembly, protochlorophyllide reductase is composed of three subunits; ChlL, ChlN and ChlB. Forms a heterotetramer of two ChlB and two ChlN subunits. Requires [4Fe-4S] cluster as cofactor.

The catalysed reaction is chlorophyllide a + oxidized 2[4Fe-4S]-[ferredoxin] + 2 ADP + 2 phosphate = protochlorophyllide a + reduced 2[4Fe-4S]-[ferredoxin] + 2 ATP + 2 H2O. It participates in porphyrin-containing compound metabolism; chlorophyll biosynthesis (light-independent). Functionally, component of the dark-operative protochlorophyllide reductase (DPOR) that uses Mg-ATP and reduced ferredoxin to reduce ring D of protochlorophyllide (Pchlide) to form chlorophyllide a (Chlide). This reaction is light-independent. The NB-protein (ChlN-ChlB) is the catalytic component of the complex. The protein is Light-independent protochlorophyllide reductase subunit B of Prochlorococcus marinus (strain SARG / CCMP1375 / SS120).